Reading from the N-terminus, the 596-residue chain is Pentatricopeptide repeat-containing protein At1g80270, mitochondrial (596 aa).

The transit peptide at Met-1 to Lys-69 directs the protein to the mitochondrion. A disordered region spans residues Leu-62–Asp-119. 2 stretches are compositionally biased toward acidic residues: residues Gln-72 to Ser-82 and Ser-96 to Glu-117. PPR repeat units lie at residues Gly-228–Leu-262, Ser-263–Pro-296, Ser-297–Leu-331, Asp-332–Ala-366, Asn-367–Lys-397, Tyr-399–Ala-433, Ser-434–Ile-468, Glu-469–Lys-503, and Met-505–Ser-539.

This sequence belongs to the PPR family. P subfamily.

The protein resides in the mitochondrion. In Arabidopsis thaliana (Mouse-ear cress), this protein is Pentatricopeptide repeat-containing protein At1g80270, mitochondrial.